Here is an 86-residue protein sequence, read N- to C-terminus: Small ribosomal subunit protein bS16 (86 aa).

This sequence belongs to the bacterial ribosomal protein bS16 family.

In Thermoanaerobacter pseudethanolicus (strain ATCC 33223 / 39E) (Clostridium thermohydrosulfuricum), this protein is Small ribosomal subunit protein bS16.